The chain runs to 295 residues: ATP synthase gamma chain (295 aa).

Belongs to the ATPase gamma chain family. In terms of assembly, F-type ATPases have 2 components, CF(1) - the catalytic core - and CF(0) - the membrane proton channel. CF(1) has five subunits: alpha(3), beta(3), gamma(1), delta(1), epsilon(1). CF(0) has three main subunits: a, b and c.

Its subcellular location is the cell inner membrane. Its function is as follows. Produces ATP from ADP in the presence of a proton gradient across the membrane. The gamma chain is believed to be important in regulating ATPase activity and the flow of protons through the CF(0) complex. This chain is ATP synthase gamma chain, found in Sulfurovum sp. (strain NBC37-1).